Here is a 513-residue protein sequence, read N- to C-terminus: rRNA N(6)-adenosine-methyltransferase ZCCHC4 (513 aa).

Zn(2+) is bound by residues Cys40, His42, Cys64, Cys73, Cys125, Cys128, His140, and His143. A GRF-type zinc finger spans residues 40–82 (CPHGPTLLFVKVTQGKEETRRFYACSACRDRKDCNFFQWEDEK). Residues 172–175 (QYLF), Arg202, Asp225, 243–244 (NM), and Asp276 each bind S-adenosyl-L-methionine. Positions 337-357 (QVDYDNHALYKHGKTGRKQSP) are regulatory loop. Zn(2+)-binding residues include Cys380, Cys383, His393, Cys394, Cys397, Cys400, His410, Cys411, Cys414, Cys417, His424, Cys425, Cys428, Cys431, His436, and Cys438. Positions 395 to 447 (ELCNSCTSKDGRKWNHCFLCKKCVKPSWIHCSICNHCAVPDHSCEGPKHGCFI) constitute a DHHC domain. The CCHC-type zinc finger occupies 443 to 460 (HGCFICGELDHKRSTCPN). Residues 466 to 481 (RANKAVRKQKQRKSNK) are compositionally biased toward basic residues. The interval 466–513 (RANKAVRKQKQRKSNKMKMETTKGQSMNHTSATRRKKRRERAHQYLGS) is disordered. Over residues 487–496 (TKGQSMNHTS) the composition is skewed to polar residues. The segment covering 497–506 (ATRRKKRRER) has biased composition (basic residues).

Belongs to the ZCCHC4 family. Interacts with components of the ASC-1 complex TRIP4, ASCC1, ASCC2 and ASCC3. Interact with AHCYL1 and AHCYL2. Interact with YTHDC2.

It localises to the nucleus. Its subcellular location is the nucleolus. The protein localises to the cytoplasm. The enzyme catalyses adenosine(4220) in 28S rRNA + S-adenosyl-L-methionine = N(6)-methyladenosine(4220) in 28S rRNA + S-adenosyl-L-homocysteine + H(+). In terms of biological role, rRNA N6-methyltransferase that specifically methylates the adenine in position 4220 of 28S rRNA. N6-methylation of adenine(4220) in 28S rRNA is required for translation. The protein is rRNA N(6)-adenosine-methyltransferase ZCCHC4 of Homo sapiens (Human).